Consider the following 127-residue polypeptide: Chorismate mutase AroH (127 aa).

Residues 3-121 (IRGIRGATTV…VVVLRPDLSL (119 aa)) form the Chorismate mutase aroH-type domain. Residues Arg7, 74–78 (TCMQE), Arg90, and Tyr108 each bind prephenate.

In terms of assembly, homotrimer.

It localises to the cytoplasm. The enzyme catalyses chorismate = prephenate. Its pathway is metabolic intermediate biosynthesis; prephenate biosynthesis; prephenate from chorismate: step 1/1. In terms of biological role, catalyzes the Claisen rearrangement of chorismate to prephenate. Probably involved in the aromatic amino acid biosynthesis. In Bacillus subtilis (strain 168), this protein is Chorismate mutase AroH.